The chain runs to 561 residues: Acylcarnitine hydrolase (561 aa).

Positions 1-26 are cleaved as a signal peptide; sequence MARKQPHSWLNAVLFGLLLILIHVWG. A disulfide bond links Cys97 and Cys125. Ser230 (acyl-ester intermediate) is an active-site residue. Cys282 and Cys293 are oxidised to a cystine. Active-site charge relay system residues include Glu347 and His459.

It belongs to the type-B carboxylesterase/lipase family. In terms of tissue distribution, expressed in liver, stomach and kidney.

Its subcellular location is the microsome. The protein resides in the endoplasmic reticulum. The enzyme catalyses all-trans-retinyl hexadecanoate + H2O = all-trans-retinol + hexadecanoate + H(+). It catalyses the reaction an O-acyl-(R)-carnitine + H2O = (R)-carnitine + a fatty acid + H(+). In terms of biological role, hydrolase with high activity towards palmitoylcarnitine. Is also active with p-nitrophenylacetate and alpha-naphthylacetate. May also hydrolyze retinyl esters. The polypeptide is Acylcarnitine hydrolase (Rattus norvegicus (Rat)).